We begin with the raw amino-acid sequence, 145 residues long: D-aminoacyl-tRNA deacylase (145 aa).

The short motif at glycine 137–proline 138 is the Gly-cisPro motif, important for rejection of L-amino acids element.

The protein belongs to the DTD family. In terms of assembly, homodimer.

It localises to the cytoplasm. It catalyses the reaction glycyl-tRNA(Ala) + H2O = tRNA(Ala) + glycine + H(+). It carries out the reaction a D-aminoacyl-tRNA + H2O = a tRNA + a D-alpha-amino acid + H(+). Its function is as follows. An aminoacyl-tRNA editing enzyme that deacylates mischarged D-aminoacyl-tRNAs. Also deacylates mischarged glycyl-tRNA(Ala), protecting cells against glycine mischarging by AlaRS. Acts via tRNA-based rather than protein-based catalysis; rejects L-amino acids rather than detecting D-amino acids in the active site. By recycling D-aminoacyl-tRNA to D-amino acids and free tRNA molecules, this enzyme counteracts the toxicity associated with the formation of D-aminoacyl-tRNA entities in vivo and helps enforce protein L-homochirality. This Pseudomonas putida (strain GB-1) protein is D-aminoacyl-tRNA deacylase.